A 119-amino-acid chain; its full sequence is uncharacterized protein (119 aa).

Residues 6-36 (QAYLDIQGKIAEFRREIKALRVEEKAITANL) adopt a coiled-coil conformation. The tract at residues 95–119 (AVTGSSSNVKIRKSAPARNEEDDDG) is disordered.

This is an uncharacterized protein from Frog virus 3 (isolate Goorha) (FV-3).